Here is a 487-residue protein sequence, read N- to C-terminus: Probable cytosol aminopeptidase (487 aa).

Mn(2+) is bound by residues lysine 253 and aspartate 258. Residue lysine 265 is part of the active site. Positions 277, 337, and 339 each coordinate Mn(2+). The active site involves arginine 341.

This sequence belongs to the peptidase M17 family. The cofactor is Mn(2+).

The protein localises to the cytoplasm. It carries out the reaction Release of an N-terminal amino acid, Xaa-|-Yaa-, in which Xaa is preferably Leu, but may be other amino acids including Pro although not Arg or Lys, and Yaa may be Pro. Amino acid amides and methyl esters are also readily hydrolyzed, but rates on arylamides are exceedingly low.. The catalysed reaction is Release of an N-terminal amino acid, preferentially leucine, but not glutamic or aspartic acids.. Presumably involved in the processing and regular turnover of intracellular proteins. Catalyzes the removal of unsubstituted N-terminal amino acids from various peptides. The chain is Probable cytosol aminopeptidase from Parasynechococcus marenigrum (strain WH8102).